We begin with the raw amino-acid sequence, 477 residues long: Chaperonin GroEL 2 (477 aa).

Residues 29–32 (TLGP), 86–90 (DGTTT), and Gly416 each bind ATP.

The protein belongs to the chaperonin (HSP60) family. As to quaternary structure, forms a cylinder of 14 subunits composed of two heptameric rings stacked back-to-back. Interacts with the co-chaperonin GroES.

Its subcellular location is the cytoplasm. It catalyses the reaction ATP + H2O + a folded polypeptide = ADP + phosphate + an unfolded polypeptide.. Functionally, together with its co-chaperonin GroES, plays an essential role in assisting protein folding. The GroEL-GroES system forms a nano-cage that allows encapsulation of the non-native substrate proteins and provides a physical environment optimized to promote and accelerate protein folding. The sequence is that of Chaperonin GroEL 2 from Streptomyces lividans.